A 366-amino-acid chain; its full sequence is Tetraacyldisaccharide 4'-kinase (366 aa).

Residue T65–T72 participates in ATP binding. The tract at residues A343–A366 is disordered. Basic and acidic residues predominate over residues N356 to A366.

It belongs to the LpxK family.

The enzyme catalyses a lipid A disaccharide + ATP = a lipid IVA + ADP + H(+). The protein operates within glycolipid biosynthesis; lipid IV(A) biosynthesis; lipid IV(A) from (3R)-3-hydroxytetradecanoyl-[acyl-carrier-protein] and UDP-N-acetyl-alpha-D-glucosamine: step 6/6. Functionally, transfers the gamma-phosphate of ATP to the 4'-position of a tetraacyldisaccharide 1-phosphate intermediate (termed DS-1-P) to form tetraacyldisaccharide 1,4'-bis-phosphate (lipid IVA). The sequence is that of Tetraacyldisaccharide 4'-kinase from Cupriavidus pinatubonensis (strain JMP 134 / LMG 1197) (Cupriavidus necator (strain JMP 134)).